Here is a 314-residue protein sequence, read N- to C-terminus: L-lactate dehydrogenase 1 (314 aa).

NAD(+) is bound by residues Val-16, Asp-37, Lys-42, Tyr-68, and 82-83 (GL). Substrate-binding positions include Gln-85, Arg-91, and 123 to 126 (NPVD). NAD(+)-binding positions include 121–123 (ATN) and Ser-146. 151 to 154 (DSAR) contributes to the substrate binding site. Beta-D-fructose 1,6-bisphosphate is bound by residues Arg-156 and His-171. Residue His-178 is the Proton acceptor of the active site. Position 223 is a phosphotyrosine (Tyr-223). Thr-232 lines the substrate pocket.

This sequence belongs to the LDH/MDH superfamily. LDH family. In terms of assembly, homotetramer.

Its subcellular location is the cytoplasm. It carries out the reaction (S)-lactate + NAD(+) = pyruvate + NADH + H(+). Its pathway is fermentation; pyruvate fermentation to lactate; (S)-lactate from pyruvate: step 1/1. With respect to regulation, allosterically activated by fructose 1,6-bisphosphate (FBP). Its function is as follows. Catalyzes the conversion of lactate to pyruvate. In Bacillus anthracis, this protein is L-lactate dehydrogenase 1.